The following is an 851-amino-acid chain: Probable disease resistance protein At1g15890 (851 aa).

The NB-ARC domain occupies 139-441 (AEKIPAPKVE…CEGFIDGNED (303 aa)). Position 181-188 (181-188 (GMGGVGKT)) interacts with ATP. 5 LRR repeats span residues 514-535 (SLRR…SNSP), 536-557 (NLST…FFRF), 560-582 (ALVV…ISKL), 584-605 (SLQY…FKEL), and 607-629 (KLIH…ATSL).

This sequence belongs to the disease resistance NB-LRR family.

Its function is as follows. Probable disease resistance protein. The chain is Probable disease resistance protein At1g15890 from Arabidopsis thaliana (Mouse-ear cress).